The sequence spans 235 residues: Small ribosomal subunit protein uS3 (235 aa).

Residues 39 to 107 (IRQYVFKALP…DVSLNIVEIR (69 aa)) form the KH type-2 domain.

Belongs to the universal ribosomal protein uS3 family. Part of the 30S ribosomal subunit. Forms a tight complex with proteins S10 and S14.

Functionally, binds the lower part of the 30S subunit head. Binds mRNA in the 70S ribosome, positioning it for translation. The chain is Small ribosomal subunit protein uS3 from Sphingopyxis alaskensis (strain DSM 13593 / LMG 18877 / RB2256) (Sphingomonas alaskensis).